Here is a 383-residue protein sequence, read N- to C-terminus: 3-phytase (383 aa).

The first 26 residues, 1–26, serve as a signal peptide directing secretion; it reads MNHSKTLLLTAAAGLMLTCGAVSSQA. Residues 27–29 constitute a propeptide that is removed on maturation; it reads KHK. The region spanning 30 to 362 is the BPP domain; that stretch reads LSDPYHFTVN…VPWERIADQI (333 aa).

It depends on Ca(2+) as a cofactor.

It localises to the secreted. The enzyme catalyses 1D-myo-inositol hexakisphosphate + H2O = 1D-myo-inositol 1,2,4,5,6-pentakisphosphate + phosphate. Functionally, catalyzes the hydrolysis of inorganic orthophosphate from phytate. Only phytate, ADP, and ATP were hydrolyzed (100, 75, and 50% of the relative activity, respectively). The polypeptide is 3-phytase (phyC) (Bacillus subtilis).